Consider the following 57-residue polypeptide: UPF0434 protein Spea_1772 (57 aa).

Belongs to the UPF0434 family.

This Shewanella pealeana (strain ATCC 700345 / ANG-SQ1) protein is UPF0434 protein Spea_1772.